Reading from the N-terminus, the 234-residue chain is Thymidylate kinase (234 aa).

11 to 18 (GLEGSGKT) is a binding site for ATP.

It belongs to the thymidylate kinase family.

It catalyses the reaction dTMP + ATP = dTDP + ADP. Functionally, phosphorylation of dTMP to form dTDP in both de novo and salvage pathways of dTTP synthesis. This chain is Thymidylate kinase, found in Wigglesworthia glossinidia brevipalpis.